The primary structure comprises 215 residues: Ependymin (215 aa).

The N-terminal stretch at 1–20 (MHTVKLLCVVFSCLCAVAWA) is a signal peptide. Residues asparagine 71 and asparagine 94 are each glycosylated (N-linked (GlcNAc...) asparagine).

This sequence belongs to the ependymin family. As to quaternary structure, forms disulfide-linked dimers. Binds calcium through the terminal sialic acids. In terms of tissue distribution, EPDs are synthesized in the meninx and secreted in the cerebrospinal fluid.

It is found in the secreted. Functionally, may play a role in neural plasticity. May be involved during axon regeneration. In Cyprinus carpio (Common carp), this protein is Ependymin (epd).